Consider the following 127-residue polypeptide: Glycine cleavage system H protein (127 aa).

The 82-residue stretch at 24–105 (TALVGITDFA…YGEGWMVKMK (82 aa)) folds into the Lipoyl-binding domain. Residue lysine 65 is modified to N6-lipoyllysine.

This sequence belongs to the GcvH family. In terms of assembly, the glycine cleavage system is composed of four proteins: P, T, L and H. It depends on (R)-lipoate as a cofactor.

Its function is as follows. The glycine cleavage system catalyzes the degradation of glycine. The H protein shuttles the methylamine group of glycine from the P protein to the T protein. The polypeptide is Glycine cleavage system H protein (Chlorobium phaeovibrioides (strain DSM 265 / 1930) (Prosthecochloris vibrioformis (strain DSM 265))).